Here is a 282-residue protein sequence, read N- to C-terminus: MLAQATTAGSFNHHASTVLQGCRGVPAAMWSEPAGAIRRHCATIDGMDCEVAREALSARLDGERAPVPSARVDEHLGECSACRAWFTQVASQAGDLRRLAESRPVVPPVGRLGIRRAPRRQHSPMTWRRWALLCVGIAQIALGTVQGFGLDVGLTHQHPTGAGTHLLNESTSWSIALGVIMVGAALWPSAAAGLAGVLTAFVAILTGYVIVDALSGAVSTTRILTHLPVVIGAVLAIMVWRSASGPRPRPDAVAAEPDIVLPDNASRGRRRGHLWPTDGSAA.

4 consecutive transmembrane segments (helical) span residues 130–150 (WALLCVGIAQIALGTVQGFGL), 170–190 (STSWSIALGVIMVGAALWPSA), 191–211 (AAGLAGVLTAFVAILTGYVIV), and 223–243 (ILTHLPVVIGAVLAIMVWRSA). The segment at 263–282 (DNASRGRRRGHLWPTDGSAA) is disordered.

Its subcellular location is the cell membrane. This is an uncharacterized protein from Mycobacterium tuberculosis (strain CDC 1551 / Oshkosh).